Here is a 502-residue protein sequence, read N- to C-terminus: Lysine--tRNA ligase (502 aa).

Mg(2+) contacts are provided by Glu399 and Glu406.

This sequence belongs to the class-II aminoacyl-tRNA synthetase family. In terms of assembly, homodimer. Mg(2+) is required as a cofactor.

It is found in the cytoplasm. It catalyses the reaction tRNA(Lys) + L-lysine + ATP = L-lysyl-tRNA(Lys) + AMP + diphosphate. This is Lysine--tRNA ligase from Synechococcus sp. (strain RCC307).